A 940-amino-acid polypeptide reads, in one-letter code: MSCWTLVQQDFLEAPSVDALKTSLESKNDYVKISAMKTILRVVINGDSLPSILMHVIRFVMPSRNKELKKLLYYYWEVCPKYNNDGTMKQEMILACNSFRNDLQHPNEFIRGATLRFLCKLKEPELLDPLIPTVRQCLEHRHAYVRKNAILAVFSIYQVSNHLIPDAASLAEDFLAAESEGTCKRNALIVLFTIDPEKAKAWLLANFEQIPSLNASSLLVIIEFIRKVVLTKADGLEKLRFQSLLVSLTATNNSSVVFEAATSVINVFPDAESLKLAASRLLALADREADNNAKLIMLDRISQLAARDKSILEDLITDVIPFLSSSDFDVCEKAISIIMGLVSSRNVEDILNHFQKELTKSNGETEKDDGRRRALTKAIHSCAINFPHTAATAIQYLLSHISDFQSKSASSVLSFIKEVMEKFPDLRSSNITKLLLSLKELRAGKIFRGVIWIAGEYCLTEDDIRVAWKSIRASLGEVPILASEEQLLKDVSNVPEDDLLIDISAPASTSRKVLPDGTYATESAVTSEALSAARLEAVKASKKPPLRTQILSGDYYLAAVLASALTKLVMRFARLSFDKERLNALKAEACLIMTSIIRVGQSKFVKYTIDDDSVERIMNCIRAIYSFEELPEFQTVFLDDMRKAFSSLVAQSDKRQKEADLLVNGSDAVQADELLNIRQFQRVIEEKQDLNFESDIIQATNDGMVVEDLASKLDHIVQLAGFTDPVYCEAYVKIQQFDIILDILLVNRTDTTLQNLSVDLATLGDLKVVERPPPMNLGPHAFKSVQATVKVSSTESAVIFGNIVYGGKASDEDKIVVLNGIPVNIIDYIKPAFIPESQFRSMWTEFEWENKVDISSNEDISLYDFLHKIMKKTNMNCLTPDASLRGDCGFLSANLYACSIFGEDALMSLSVEKSVSGPISGHVRIRSKTQGIALSLGAFV.

4 HEAT repeats span residues 11-48 (FLEA…NGDS), 90-125 (QEMI…KEPE), 126-162 (LLDP…VSNH), and 310-347 (SILE…SRNV).

In terms of assembly, oligomeric complex that consists of at least the alpha, beta, beta', gamma, delta, epsilon and zeta subunits.

The protein localises to the cytoplasm. Its subcellular location is the golgi apparatus membrane. It localises to the cytoplasmic vesicle. The protein resides in the COPI-coated vesicle membrane. Its function is as follows. The coatomer is a cytosolic protein complex that binds to dilysine motifs and reversibly associates with Golgi non-clathrin-coated vesicles, which further mediate biosynthetic protein transport from the ER, via the Golgi up to the trans Golgi network. Coatomer complex is required for budding from Golgi membranes, and is essential for the retrograde Golgi-to-ER transport of dilysine-tagged proteins. This Schizosaccharomyces pombe (strain 972 / ATCC 24843) (Fission yeast) protein is Coatomer subunit beta (sec26).